The primary structure comprises 117 residues: Ribosome-binding factor A (117 aa).

This sequence belongs to the RbfA family. As to quaternary structure, monomer. Binds 30S ribosomal subunits, but not 50S ribosomal subunits or 70S ribosomes.

It localises to the cytoplasm. Its function is as follows. One of several proteins that assist in the late maturation steps of the functional core of the 30S ribosomal subunit. Associates with free 30S ribosomal subunits (but not with 30S subunits that are part of 70S ribosomes or polysomes). Required for efficient processing of 16S rRNA. May interact with the 5'-terminal helix region of 16S rRNA. The polypeptide is Ribosome-binding factor A (Streptococcus thermophilus (strain CNRZ 1066)).